Here is a 97-residue protein sequence, read N- to C-terminus: Co-chaperonin GroES (97 aa).

The protein belongs to the GroES chaperonin family. As to quaternary structure, heptamer of 7 subunits arranged in a ring. Interacts with the chaperonin GroEL.

The protein resides in the cytoplasm. Together with the chaperonin GroEL, plays an essential role in assisting protein folding. The GroEL-GroES system forms a nano-cage that allows encapsulation of the non-native substrate proteins and provides a physical environment optimized to promote and accelerate protein folding. GroES binds to the apical surface of the GroEL ring, thereby capping the opening of the GroEL channel. The chain is Co-chaperonin GroES from Pseudomonas entomophila (strain L48).